The sequence spans 238 residues: Ribitol-5-phosphate cytidylyltransferase 2 (238 aa).

CTP-binding positions include 7-10 (LAGG) and 81-87 (GTDRNET).

The protein belongs to the IspD/TarI cytidylyltransferase family. TarI subfamily. As to quaternary structure, heterodimer together with TarJ.

The catalysed reaction is D-ribitol 5-phosphate + CTP + H(+) = CDP-L-ribitol + diphosphate. It participates in cell wall biogenesis; poly(ribitol phosphate) teichoic acid biosynthesis. Functionally, catalyzes the transfer of the cytidylyl group of CTP to D-ribitol 5-phosphate. This is Ribitol-5-phosphate cytidylyltransferase 2 from Staphylococcus aureus (strain NCTC 8325 / PS 47).